Consider the following 314-residue polypeptide: Glutathione synthetase (314 aa).

Residues 125–309 (KLFVMNFPQL…VAAKVWDTIE (185 aa)) enclose the ATP-grasp domain. 151–207 (RDKHGAVVMKPLHGHGGAAVFRVMPQDMNFGSLFDMFTVTFKEPWVIQQFIPEVKHG) contributes to the ATP binding site. Mg(2+)-binding residues include Glu-280 and Asn-282.

The protein belongs to the prokaryotic GSH synthase family. The cofactor is Mg(2+). Mn(2+) serves as cofactor.

It carries out the reaction gamma-L-glutamyl-L-cysteine + glycine + ATP = glutathione + ADP + phosphate + H(+). The protein operates within sulfur metabolism; glutathione biosynthesis; glutathione from L-cysteine and L-glutamate: step 2/2. The polypeptide is Glutathione synthetase (Bradyrhizobium diazoefficiens (strain JCM 10833 / BCRC 13528 / IAM 13628 / NBRC 14792 / USDA 110)).